A 1420-amino-acid chain; its full sequence is MKDLFKFFKTHSNGKIEEFNTIKIQLASPDMIRSWSFGEVKKPETINYRTFKPERDGLFCSRIFGPIKDYECLCGKYKRLKHRGVVCEKCGVEVTQSKVRRERMGHIELASPTAHIWFLKSLPSRIGLLLDMPLRDIERVLYFESYVVVEGGMTSLECRQILTEEEYLDALEEFGDEFEAKMGAEAIQILLKNMDLKNECECLRAFLEDSHSETKRKKVSKRIKLIESFILSNNKPEWMILNVLPVLPPDLRPLVPLDGGRFATSDLNDLYRRVINRNNRLKRLLDLSAPEIIVRNEKRMLQEAVDALLDNGRRGRAITGANKRPLKSLADMIKGKQGRFRQNLLGKRVDYSGRSVITVGPYLKLHQCGLPKKMALELFKPFIYGQLELKGLASTIKAAKKMVDREESVVWDILEDVIKEHPVMLNRAPTLHRLGIQAFEPILIEGKAIQLHPLVCAAYNADFDGDQMAVHVPLTLEAQLEARALMMSTNNILSPANGEPIIVPSQDVVLGLYYMTRDRINSKGEGMVLSNPKEAERLYRLGIAELHARVKVRITEYKLDNHGRWVDKINFVNSTIGRAIFWMIVPKGLSFDLVNKVLGKKSISMMLNHCYRVLGLQSTVMFADQIMYTGFTYAARSGASVGIDDMIIPTKKVDIIDAAESEVAEIQEQFQTGLVTAGERYNKVIDIWASANERVSKAMMDNLATETVINSHGLLETQASFNNIFMMADSGARGSAAQIRQLAGMRGLMAKPDGSIIETPITANFREGLNVLQYFISTHGARKGLADTALKTANSGYLTRRLVDVAQDLVITQDDCNTFAGIVMSAIIEGGDVKESLRERVLGRVLAEDILKSSNDSDVSNSEVLIKRNILLDEFYCDILDEYLIDVVKVRSVVTCDTDFGVCAKCYGRDLARGKLVNKGEAIGVIAAQSIGEPGTQLTMRTFHIGGAASRVASESSIQIKNQGIVRLKNVKAVINGQGKLVITSRHAELKIVDQFDRAKESYKIPYGSIVMKKDGELAVSGEIVAYWDPHTMPVIAEVSGFVKFIDMVDGQSVIHQTDDLTGLTSIVVLDTSERVSSAKDLRPTLKIIDVNGYDIFIPGTDISAQYFLPGKSVIQLVDGSRIISGDVLARLPHETSGTKDITGGLPRVADLFEARRPKEAAILAEISGVISFGKETKGKRRLMICSTDENGGENIYEEMIPKWRHLNVFEGEYVERGDVISDGPESPHDILRLRGVHAVTNYIVNEVQEVYRLQGVKINDKHIEVIIRQMLRKAIVIRSGDSDFLAGEQVEYARIKIVNQTLEREGKVKVSFVRNLLGITKASLATESFISAASFQETTRVLTESSVAGKKDDLRGLKENVIVGRLIPAGTGYAYHQKRILKRYSESYSDSKLKENLIETIPVTADEASANLTELLNAT.

Residues Cys72, Cys74, Cys87, and Cys90 each contribute to the Zn(2+) site. Mg(2+)-binding residues include Asp462, Asp464, and Asp466. Zn(2+) contacts are provided by Cys816, Cys896, Cys903, and Cys906.

It belongs to the RNA polymerase beta' chain family. The RNAP catalytic core consists of 2 alpha, 1 beta, 1 beta' and 1 omega subunit. When a sigma factor is associated with the core the holoenzyme is formed, which can initiate transcription. The cofactor is Mg(2+). It depends on Zn(2+) as a cofactor.

The catalysed reaction is RNA(n) + a ribonucleoside 5'-triphosphate = RNA(n+1) + diphosphate. In terms of biological role, DNA-dependent RNA polymerase catalyzes the transcription of DNA into RNA using the four ribonucleoside triphosphates as substrates. This Blochmanniella floridana protein is DNA-directed RNA polymerase subunit beta'.